We begin with the raw amino-acid sequence, 63 residues long: Cecropin-A1 (63 aa).

The signal sequence occupies residues 1 to 23 (MKFYNIFVFVALILAITIGQSEA). The residue at position 62 (R62) is an Arginine amide.

It belongs to the cecropin family.

The protein resides in the secreted. Cecropins have lytic and antibacterial activity against several Gram-positive and Gram-negative bacteria. This is Cecropin-A1 (CecA1) from Drosophila mauritiana (Fruit fly).